We begin with the raw amino-acid sequence, 242 residues long: DNA repair protein RecO (242 aa).

It belongs to the RecO family.

In terms of biological role, involved in DNA repair and RecF pathway recombination. This is DNA repair protein RecO from Nitrosospira multiformis (strain ATCC 25196 / NCIMB 11849 / C 71).